We begin with the raw amino-acid sequence, 74 residues long: Small ribosomal subunit protein eS28 (74 aa).

The protein belongs to the eukaryotic ribosomal protein eS28 family.

The polypeptide is Small ribosomal subunit protein eS28 (Halobacterium salinarum (strain ATCC 29341 / DSM 671 / R1)).